We begin with the raw amino-acid sequence, 753 residues long: 5-methyltetrahydropteroyltriglutamate--homocysteine methyltransferase (753 aa).

5-methyltetrahydropteroyltri-L-glutamate is bound by residues 17-20 (RELK) and Lys-117. L-homocysteine is bound by residues 431-433 (IGS) and Glu-484. Residues 431–433 (IGS) and Glu-484 each bind L-methionine. 5-methyltetrahydropteroyltri-L-glutamate-binding positions include 515 to 516 (RC) and Trp-561. Asp-599 contacts L-homocysteine. Residue Asp-599 coordinates L-methionine. Glu-605 serves as a coordination point for 5-methyltetrahydropteroyltri-L-glutamate. 3 residues coordinate Zn(2+): His-641, Cys-643, and Glu-665. His-694 serves as the catalytic Proton donor. A Zn(2+)-binding site is contributed by Cys-726.

Belongs to the vitamin-B12 independent methionine synthase family. Zn(2+) is required as a cofactor.

It catalyses the reaction 5-methyltetrahydropteroyltri-L-glutamate + L-homocysteine = tetrahydropteroyltri-L-glutamate + L-methionine. It functions in the pathway amino-acid biosynthesis; L-methionine biosynthesis via de novo pathway; L-methionine from L-homocysteine (MetE route): step 1/1. Functionally, catalyzes the transfer of a methyl group from 5-methyltetrahydrofolate to homocysteine resulting in methionine formation. This chain is 5-methyltetrahydropteroyltriglutamate--homocysteine methyltransferase, found in Escherichia coli O6:H1 (strain CFT073 / ATCC 700928 / UPEC).